A 213-amino-acid polypeptide reads, in one-letter code: Protein Syd (213 aa).

It belongs to the Syd family.

It localises to the cell inner membrane. Functionally, interacts with the SecY protein in vivo. May bind preferentially to an uncomplexed state of SecY, thus functioning either as a chelating agent for excess SecY in the cell or as a regulatory factor that negatively controls the translocase function. The polypeptide is Protein Syd (Shewanella pealeana (strain ATCC 700345 / ANG-SQ1)).